A 148-amino-acid chain; its full sequence is Wheatwin-2 (148 aa).

The first 23 residues, 1–23 (MTMAARLMLVAALLCAAAAAATA), serve as a signal peptide directing secretion. Gln24 is subject to Pyrrolidone carboxylic acid. The 125-residue stretch at 24–148 (QQATNVRATY…VNYQFVDCRD (125 aa)) folds into the Barwin domain. 3 disulfide bridges follow: Cys54–Cys86, Cys75–Cys109, and Cys89–Cys146.

As to quaternary structure, monomer.

Functionally, shows antifungal activity towards B.cinerea and towards the wheat-specific pathogenic fungi F.culmorum and F.graminearum (groups 1 and 2). The polypeptide is Wheatwin-2 (PR4B) (Triticum aestivum (Wheat)).